We begin with the raw amino-acid sequence, 330 residues long: tRNA U34 carboxymethyltransferase (330 aa).

Residues lysine 91, tryptophan 105, lysine 110, glycine 130, 152–154 (DPS), 181–182 (IE), methionine 196, tyrosine 200, and arginine 315 each bind carboxy-S-adenosyl-L-methionine.

Belongs to the class I-like SAM-binding methyltransferase superfamily. CmoB family. As to quaternary structure, homotetramer.

It catalyses the reaction carboxy-S-adenosyl-L-methionine + 5-hydroxyuridine(34) in tRNA = 5-carboxymethoxyuridine(34) in tRNA + S-adenosyl-L-homocysteine + H(+). In terms of biological role, catalyzes carboxymethyl transfer from carboxy-S-adenosyl-L-methionine (Cx-SAM) to 5-hydroxyuridine (ho5U) to form 5-carboxymethoxyuridine (cmo5U) at position 34 in tRNAs. This chain is tRNA U34 carboxymethyltransferase, found in Shewanella piezotolerans (strain WP3 / JCM 13877).